Consider the following 78-residue polypeptide: D-alanyl carrier protein (78 aa).

Residues 1–78 (MEFKQEVLDV…NIVNKLTELK (78 aa)) form the Carrier domain. Serine 36 is subject to O-(pantetheine 4'-phosphoryl)serine.

It belongs to the DltC family. Post-translationally, 4'-phosphopantetheine is transferred from CoA to a specific serine of apo-DCP.

The protein localises to the cytoplasm. It functions in the pathway cell wall biogenesis; lipoteichoic acid biosynthesis. In terms of biological role, carrier protein involved in the D-alanylation of lipoteichoic acid (LTA). The loading of thioester-linked D-alanine onto DltC is catalyzed by D-alanine--D-alanyl carrier protein ligase DltA. The DltC-carried D-alanyl group is further transferred to cell membrane phosphatidylglycerol (PG) by forming an ester bond, probably catalyzed by DltD. D-alanylation of LTA plays an important role in modulating the properties of the cell wall in Gram-positive bacteria, influencing the net charge of the cell wall. The protein is D-alanyl carrier protein of Bacillus velezensis (strain DSM 23117 / BGSC 10A6 / LMG 26770 / FZB42) (Bacillus amyloliquefaciens subsp. plantarum).